The primary structure comprises 613 residues: WD40 repeat-containing protein HOS15 (613 aa).

The LisH domain occupies 5 to 37 (TSVELNFLVFRYLQESGFTHAAFTLGYEAGINK). Disordered regions lie at residues 101-174 (KKRK…REKM) and 193-214 (EIEREREREKIEREKSHEKQLG). WD repeat units follow at residues 263–302 (GHTSEVCACAWSPSASLLASGSGDATARIWSIPEGSFKAV), 322–362 (EKSK…STLS), 363–402 (KHKGPIFSLKWNKKGDYLLTGSVDRTAVVWDVKAEEWKQQ), 405–443 (FHSGPTLDVDWRNNVSFATSSTDSMIYLCKIGETRPAKT), 446–485 (GHQGEVNCVKWDPTGSLLASCSDDSTAKIWNIKQSTFVHD), 488–536 (EHTK…MLCS), 539–580 (GHRE…KTYT), and 582–613 (NGGIFEVCWNKEGNKIAACFADNSVCVLDFRM).

It is found in the nucleus. In terms of biological role, acts as a repressor of cold stress-regulated gene expression. Interacts specifically with and promotes deacetylation of histone H4. Plays a role in gene regulation for plant acclimation and tolerance to cold stress. The protein is WD40 repeat-containing protein HOS15 of Arabidopsis thaliana (Mouse-ear cress).